A 1057-amino-acid polypeptide reads, in one-letter code: Carbamoyl phosphate synthase large chain (1057 aa).

Positions 1–401 (MPKRNDIKTI…SLLKAIRSLE (401 aa)) are carboxyphosphate synthetic domain. Positions 129, 169, 175, 176, 208, 210, 215, 241, 242, 243, 284, and 298 each coordinate ATP. The ATP-grasp 1 domain occupies 133–327 (RTLMNDLNVP…IAKLAAKIAV (195 aa)). Mg(2+)-binding residues include glutamine 284, glutamate 298, and asparagine 300. Mn(2+) contacts are provided by glutamine 284, glutamate 298, and asparagine 300. An oligomerization domain region spans residues 402-546 (YGVHHLGLPN…YGTYETENES (145 aa)). Residues 547–929 (IVTDKEKILV…ALFKGLTGSG (383 aa)) form a carbamoyl phosphate synthetic domain region. The region spanning 671–861 (EALLRKINVP…MAQLAMRAII (191 aa)) is the ATP-grasp 2 domain. ATP-binding residues include arginine 707, arginine 746, leucine 748, glutamate 752, glycine 777, valine 778, histidine 779, serine 780, glutamine 820, and glutamate 832. Mg(2+)-binding residues include glutamine 820, glutamate 832, and asparagine 834. Residues glutamine 820, glutamate 832, and asparagine 834 each contribute to the Mn(2+) site. The region spanning 930–1057 (VEVKDHGTVL…ESMTFTMRQM (128 aa)) is the MGS-like domain. Residues 930-1057 (VEVKDHGTVL…ESMTFTMRQM (128 aa)) are allosteric domain.

The protein belongs to the CarB family. In terms of assembly, composed of two chains; the small (or glutamine) chain promotes the hydrolysis of glutamine to ammonia, which is used by the large (or ammonia) chain to synthesize carbamoyl phosphate. Tetramer of heterodimers (alpha,beta)4. Mg(2+) serves as cofactor. Requires Mn(2+) as cofactor.

It carries out the reaction hydrogencarbonate + L-glutamine + 2 ATP + H2O = carbamoyl phosphate + L-glutamate + 2 ADP + phosphate + 2 H(+). It catalyses the reaction hydrogencarbonate + NH4(+) + 2 ATP = carbamoyl phosphate + 2 ADP + phosphate + 2 H(+). It participates in amino-acid biosynthesis; L-arginine biosynthesis; carbamoyl phosphate from bicarbonate: step 1/1. Its pathway is pyrimidine metabolism; UMP biosynthesis via de novo pathway; (S)-dihydroorotate from bicarbonate: step 1/3. In terms of biological role, large subunit of the glutamine-dependent carbamoyl phosphate synthetase (CPSase). CPSase catalyzes the formation of carbamoyl phosphate from the ammonia moiety of glutamine, carbonate, and phosphate donated by ATP, constituting the first step of 2 biosynthetic pathways, one leading to arginine and/or urea and the other to pyrimidine nucleotides. The large subunit (synthetase) binds the substrates ammonia (free or transferred from glutamine from the small subunit), hydrogencarbonate and ATP and carries out an ATP-coupled ligase reaction, activating hydrogencarbonate by forming carboxy phosphate which reacts with ammonia to form carbamoyl phosphate. In Staphylococcus aureus (strain USA300 / TCH1516), this protein is Carbamoyl phosphate synthase large chain.